Here is a 254-residue protein sequence, read N- to C-terminus: 5'-nucleotidase SurE (254 aa).

Residues aspartate 8, aspartate 9, serine 38, and asparagine 91 each coordinate a divalent metal cation.

It belongs to the SurE nucleotidase family. It depends on a divalent metal cation as a cofactor.

The protein resides in the cytoplasm. The enzyme catalyses a ribonucleoside 5'-phosphate + H2O = a ribonucleoside + phosphate. In terms of biological role, nucleotidase that shows phosphatase activity on nucleoside 5'-monophosphates. The sequence is that of 5'-nucleotidase SurE from Anaeromyxobacter dehalogenans (strain 2CP-1 / ATCC BAA-258).